The chain runs to 228 residues: Ras-related protein Rab-32D (228 aa).

Position 16 to 23 (Gly16 to Thr23) interacts with GTP. The Effector region signature appears at Tyr38–Phe46. GTP-binding positions include Asp64–Gln68 and Asn128–Asp131. The tract at residues Ser183 to Lys228 is disordered. The segment covering Asn185–Thr196 has biased composition (acidic residues). Positions Thr211–Lys228 are enriched in low complexity. Residue Cys224 is the site of S-geranylgeranyl cysteine attachment.

It belongs to the small GTPase superfamily. Rab family.

The chain is Ras-related protein Rab-32D (rab32D) from Dictyostelium discoideum (Social amoeba).